A 429-amino-acid polypeptide reads, in one-letter code: Serine hydroxymethyltransferase (429 aa).

Residues L127 and 131-133 (GHL) contribute to the (6S)-5,6,7,8-tetrahydrofolate site. At K236 the chain carries N6-(pyridoxal phosphate)lysine. E252 is a binding site for (6S)-5,6,7,8-tetrahydrofolate.

The protein belongs to the SHMT family. As to quaternary structure, homodimer. Pyridoxal 5'-phosphate serves as cofactor.

It localises to the cytoplasm. The catalysed reaction is (6R)-5,10-methylene-5,6,7,8-tetrahydrofolate + glycine + H2O = (6S)-5,6,7,8-tetrahydrofolate + L-serine. The protein operates within one-carbon metabolism; tetrahydrofolate interconversion. It participates in amino-acid biosynthesis; glycine biosynthesis; glycine from L-serine: step 1/1. Its function is as follows. Catalyzes the reversible interconversion of serine and glycine with tetrahydrofolate (THF) serving as the one-carbon carrier. This reaction serves as the major source of one-carbon groups required for the biosynthesis of purines, thymidylate, methionine, and other important biomolecules. Also exhibits THF-independent aldolase activity toward beta-hydroxyamino acids, producing glycine and aldehydes, via a retro-aldol mechanism. This chain is Serine hydroxymethyltransferase, found in Rhodospirillum centenum (strain ATCC 51521 / SW).